Consider the following 156-residue polypeptide: ATP synthase subunit b (156 aa).

Residues Met-1–Val-21 form a helical membrane-spanning segment.

It belongs to the ATPase B chain family. In terms of assembly, F-type ATPases have 2 components, F(1) - the catalytic core - and F(0) - the membrane proton channel. F(1) has five subunits: alpha(3), beta(3), gamma(1), delta(1), epsilon(1). F(0) has three main subunits: a(1), b(2) and c(10-14). The alpha and beta chains form an alternating ring which encloses part of the gamma chain. F(1) is attached to F(0) by a central stalk formed by the gamma and epsilon chains, while a peripheral stalk is formed by the delta and b chains.

It localises to the cell inner membrane. In terms of biological role, f(1)F(0) ATP synthase produces ATP from ADP in the presence of a proton or sodium gradient. F-type ATPases consist of two structural domains, F(1) containing the extramembraneous catalytic core and F(0) containing the membrane proton channel, linked together by a central stalk and a peripheral stalk. During catalysis, ATP synthesis in the catalytic domain of F(1) is coupled via a rotary mechanism of the central stalk subunits to proton translocation. Component of the F(0) channel, it forms part of the peripheral stalk, linking F(1) to F(0). The polypeptide is ATP synthase subunit b (Nitrosococcus oceani (strain ATCC 19707 / BCRC 17464 / JCM 30415 / NCIMB 11848 / C-107)).